A 225-amino-acid chain; its full sequence is NAD(P)H-quinone oxidoreductase subunit K, chloroplastic (225 aa).

Cys-43, Cys-44, Cys-108, and Cys-139 together coordinate [4Fe-4S] cluster.

This sequence belongs to the complex I 20 kDa subunit family. NDH is composed of at least 16 different subunits, 5 of which are encoded in the nucleus. Requires [4Fe-4S] cluster as cofactor.

It localises to the plastid. It is found in the chloroplast thylakoid membrane. The catalysed reaction is a plastoquinone + NADH + (n+1) H(+)(in) = a plastoquinol + NAD(+) + n H(+)(out). The enzyme catalyses a plastoquinone + NADPH + (n+1) H(+)(in) = a plastoquinol + NADP(+) + n H(+)(out). Functionally, NDH shuttles electrons from NAD(P)H:plastoquinone, via FMN and iron-sulfur (Fe-S) centers, to quinones in the photosynthetic chain and possibly in a chloroplast respiratory chain. The immediate electron acceptor for the enzyme in this species is believed to be plastoquinone. Couples the redox reaction to proton translocation, and thus conserves the redox energy in a proton gradient. This chain is NAD(P)H-quinone oxidoreductase subunit K, chloroplastic, found in Platanus occidentalis (Sycamore).